Consider the following 927-residue polypeptide: Ribosome-releasing factor 2, mitochondrial (927 aa).

A mitochondrion-targeting transit peptide spans 1–57 (MVTAPLLGWVAVRPIPRLSKLNTCKYVSSSLQSYKRSVGSCLGKQQSRDFSYSATLT). Positions 64–379 (EKTRNIGIIA…AVNNLLPGPS (316 aa)) constitute a tr-type G domain. GTP-binding positions include 73 to 80 (AHIDAGKT), 163 to 167 (DTPGH), and 217 to 220 (NKLD).

This sequence belongs to the TRAFAC class translation factor GTPase superfamily. Classic translation factor GTPase family. EF-G/EF-2 subfamily.

It localises to the mitochondrion. In terms of biological role, mitochondrial GTPase that mediates the disassembly of ribosomes from messenger RNA at the termination of mitochondrial protein biosynthesis. Not involved in the GTP-dependent ribosomal translocation step during translation elongation. The protein is Ribosome-releasing factor 2, mitochondrial (mef2) of Talaromyces marneffei (strain ATCC 18224 / CBS 334.59 / QM 7333) (Penicillium marneffei).